Reading from the N-terminus, the 255-residue chain is 4-diphosphocytidyl-2-C-methyl-D-erythritol kinase (255 aa).

Lys6 is a catalytic residue. 95–105 (PVCAGLGGGSS) serves as a coordination point for ATP. Asp137 is an active-site residue.

This sequence belongs to the GHMP kinase family. IspE subfamily.

The enzyme catalyses 4-CDP-2-C-methyl-D-erythritol + ATP = 4-CDP-2-C-methyl-D-erythritol 2-phosphate + ADP + H(+). The protein operates within isoprenoid biosynthesis; isopentenyl diphosphate biosynthesis via DXP pathway; isopentenyl diphosphate from 1-deoxy-D-xylulose 5-phosphate: step 3/6. Catalyzes the phosphorylation of the position 2 hydroxy group of 4-diphosphocytidyl-2C-methyl-D-erythritol. This is 4-diphosphocytidyl-2-C-methyl-D-erythritol kinase from Campylobacter jejuni subsp. jejuni serotype O:2 (strain ATCC 700819 / NCTC 11168).